The sequence spans 171 residues: SWR1 complex subunit 6 (171 aa).

The tract at residues 63-87 is disordered; sequence DEDDDLGYLQKKQHKGSKRKTRQAK. A compositionally biased stretch (basic residues) spans 73 to 85; it reads KKQHKGSKRKTRQ. Residues cysteine 134, cysteine 137, cysteine 145, cysteine 148, cysteine 153, cysteine 157, histidine 161, and cysteine 166 each coordinate Zn(2+). Residues 134–166 form an HIT-type zinc finger; sequence CSVCGYIAGYNCCLCGMRFCSIRCQNIHKDTRC.

This sequence belongs to the ZNHIT1 family. Homodimer. Component of the SWR1 chromatin-remodeling complex composed of at least ARP6/ESD1/SUF3, PIE1, SWC6, SWC2 and H2AZs (HTA8, HTA9, HTA11). Interacts directly with ARP6, PIE1 and SWC2. Interacts with FLX and SUF4, two component of the transcription activator complex FRI-C, and with ASHH2 and TAF14. Expressed in root, lateral root primordia, shoot apex, leaves, stems, inflorescences, flowers, axillary buds, developing siliques and premature seeds.

It is found in the nucleus speckle. The protein localises to the nucleus. Component of the SWR1 complex which mediates the ATP-dependent exchange of histone H2A for the H2A variant H2A.F/Z leading to transcriptional regulation of selected genes (e.g. FLC) by chromatin remodeling. Coodinates SWR1-C, FRI-C (FLC transcription activator complex), histone methyltransferase and general transcription factors. Represses flowering by positively regulating FLC and MAF4. Binds to the promoter region of FLC chromatin. This Arabidopsis thaliana (Mouse-ear cress) protein is SWR1 complex subunit 6 (SWC6).